Reading from the N-terminus, the 156-residue chain is SsrA-binding protein (156 aa).

A disordered region spans residues 134–156 (RQTLREQQDKRESLRELRERNRR).

The protein belongs to the SmpB family.

The protein resides in the cytoplasm. Functionally, required for rescue of stalled ribosomes mediated by trans-translation. Binds to transfer-messenger RNA (tmRNA), required for stable association of tmRNA with ribosomes. tmRNA and SmpB together mimic tRNA shape, replacing the anticodon stem-loop with SmpB. tmRNA is encoded by the ssrA gene; the 2 termini fold to resemble tRNA(Ala) and it encodes a 'tag peptide', a short internal open reading frame. During trans-translation Ala-aminoacylated tmRNA acts like a tRNA, entering the A-site of stalled ribosomes, displacing the stalled mRNA. The ribosome then switches to translate the ORF on the tmRNA; the nascent peptide is terminated with the 'tag peptide' encoded by the tmRNA and targeted for degradation. The ribosome is freed to recommence translation, which seems to be the essential function of trans-translation. This Paenarthrobacter aurescens (strain TC1) protein is SsrA-binding protein.